The chain runs to 169 residues: Large ribosomal subunit protein uL10 (169 aa).

The protein belongs to the universal ribosomal protein uL10 family. As to quaternary structure, part of the ribosomal stalk of the 50S ribosomal subunit. The N-terminus interacts with L11 and the large rRNA to form the base of the stalk. The C-terminus forms an elongated spine to which L12 dimers bind in a sequential fashion forming a multimeric L10(L12)X complex.

Forms part of the ribosomal stalk, playing a central role in the interaction of the ribosome with GTP-bound translation factors. The protein is Large ribosomal subunit protein uL10 of Rickettsia felis (strain ATCC VR-1525 / URRWXCal2) (Rickettsia azadi).